Reading from the N-terminus, the 306-residue chain is Probable arylamine N-acetyltransferase 3 (306 aa).

C75 acts as the Acyl-thioester intermediate in catalysis. Residues H115 and D130 contribute to the active site.

The protein belongs to the arylamine N-acetyltransferase family.

The enzyme catalyses an arylamine + acetyl-CoA = an N-acetylarylamine + CoA. The polypeptide is Probable arylamine N-acetyltransferase 3 (Dictyostelium discoideum (Social amoeba)).